We begin with the raw amino-acid sequence, 197 residues long: Imidazoleglycerol-phosphate dehydratase (197 aa).

The protein belongs to the imidazoleglycerol-phosphate dehydratase family.

The protein resides in the cytoplasm. It catalyses the reaction D-erythro-1-(imidazol-4-yl)glycerol 3-phosphate = 3-(imidazol-4-yl)-2-oxopropyl phosphate + H2O. Its pathway is amino-acid biosynthesis; L-histidine biosynthesis; L-histidine from 5-phospho-alpha-D-ribose 1-diphosphate: step 6/9. The chain is Imidazoleglycerol-phosphate dehydratase from Stutzerimonas stutzeri (strain A1501) (Pseudomonas stutzeri).